A 763-amino-acid polypeptide reads, in one-letter code: Probable portal protein (763 aa).

Residues Gly668–Lys679 show a composition bias toward basic and acidic residues. Disordered regions lie at residues Gly668–Asn706 and Glu729–Asn763. Positions Ala680–Glu689 are enriched in polar residues.

As to quaternary structure, homododecamer.

Its subcellular location is the virion. Its function is as follows. Forms the portal vertex of the capsid. This portal plays critical roles in head assembly, genome packaging, neck/tail attachment, and genome ejection. The portal protein multimerizes as a single ring-shaped homododecamer arranged around a central channel. The sequence is that of Probable portal protein (59) from Escherichia coli (Bacteriophage N4).